Consider the following 160-residue polypeptide: S-adenosylmethionine decarboxylase proenzyme (160 aa).

The Schiff-base intermediate with substrate; via pyruvic acid role is filled by Ser73. Ser73 bears the Pyruvic acid (Ser); by autocatalysis mark. The active-site Proton acceptor; for processing activity is the His78. Cys93 serves as the catalytic Proton donor; for catalytic activity.

Belongs to the prokaryotic AdoMetDC family. Type 1 subfamily. In terms of assembly, heterotetramer of two alpha and two beta chains arranged as a dimer of alpha/beta heterodimers. Requires pyruvate as cofactor. Post-translationally, is synthesized initially as an inactive proenzyme. Formation of the active enzyme involves a self-maturation process in which the active site pyruvoyl group is generated from an internal serine residue via an autocatalytic post-translational modification. Two non-identical subunits are generated from the proenzyme in this reaction, and the pyruvate is formed at the N-terminus of the alpha chain, which is derived from the carboxyl end of the proenzyme. The post-translation cleavage follows an unusual pathway, termed non-hydrolytic serinolysis, in which the side chain hydroxyl group of the serine supplies its oxygen atom to form the C-terminus of the beta chain, while the remainder of the serine residue undergoes an oxidative deamination to produce ammonia and the pyruvoyl group blocking the N-terminus of the alpha chain.

It catalyses the reaction S-adenosyl-L-methionine + H(+) = S-adenosyl 3-(methylsulfanyl)propylamine + CO2. It functions in the pathway amine and polyamine biosynthesis; S-adenosylmethioninamine biosynthesis; S-adenosylmethioninamine from S-adenosyl-L-methionine: step 1/1. Functionally, catalyzes the decarboxylation of S-adenosylmethionine to S-adenosylmethioninamine (dcAdoMet), the propylamine donor required for the synthesis of the polyamines spermine and spermidine from the diamine putrescine. The polypeptide is S-adenosylmethionine decarboxylase proenzyme (Pseudomonas aeruginosa (strain LESB58)).